The chain runs to 258 residues: UPF0246 protein YaaA (258 aa).

It belongs to the UPF0246 family.

In Escherichia coli (strain SE11), this protein is UPF0246 protein YaaA.